A 155-amino-acid chain; its full sequence is Myosin light chain alkali (155 aa).

EF-hand domains follow at residues Arg7–Asn41 and Gly80–Ser115.

As to quaternary structure, myosin is a hexamer of 2 heavy chains and 4 light chains.

The chain is Myosin light chain alkali (Mlc1) from Drosophila virilis (Fruit fly).